The sequence spans 339 residues: UDP-3-O-acylglucosamine N-acyltransferase (339 aa).

The active-site Proton acceptor is the H238.

The protein belongs to the transferase hexapeptide repeat family. LpxD subfamily. Homotrimer.

It catalyses the reaction a UDP-3-O-[(3R)-3-hydroxyacyl]-alpha-D-glucosamine + a (3R)-hydroxyacyl-[ACP] = a UDP-2-N,3-O-bis[(3R)-3-hydroxyacyl]-alpha-D-glucosamine + holo-[ACP] + H(+). Its pathway is bacterial outer membrane biogenesis; LPS lipid A biosynthesis. Functionally, catalyzes the N-acylation of UDP-3-O-acylglucosamine using 3-hydroxyacyl-ACP as the acyl donor. Is involved in the biosynthesis of lipid A, a phosphorylated glycolipid that anchors the lipopolysaccharide to the outer membrane of the cell. The polypeptide is UDP-3-O-acylglucosamine N-acyltransferase (Aeromonas hydrophila subsp. hydrophila (strain ATCC 7966 / DSM 30187 / BCRC 13018 / CCUG 14551 / JCM 1027 / KCTC 2358 / NCIMB 9240 / NCTC 8049)).